A 124-amino-acid polypeptide reads, in one-letter code: Small ribosomal subunit protein uS11 (124 aa).

Belongs to the universal ribosomal protein uS11 family. Part of the 30S ribosomal subunit.

In terms of biological role, located on the platform of the 30S subunit. This is Small ribosomal subunit protein uS11 from Methanococcus aeolicus (strain ATCC BAA-1280 / DSM 17508 / OCM 812 / Nankai-3).